Reading from the N-terminus, the 465-residue chain is Amino-acid carrier protein AlsT (465 aa).

Transmembrane regions (helical) follow at residues 20 to 40, 82 to 102, 142 to 162, 177 to 197, 208 to 228, 241 to 261, 296 to 316, 336 to 356, 382 to 402, and 405 to 425; these read LFYI…FIQF, VALA…VVAA, WLGI…FNAV, VNKI…IFGG, IVPV…ITNI, NALG…VIGA, LGVF…ILLY, IGGW…FSSV, IAVI…VWDM, and LFMG…SNVA.

It belongs to the alanine or glycine:cation symporter (AGCS) (TC 2.A.25) family.

It localises to the cell membrane. In Bacillus subtilis (strain 168), this protein is Amino-acid carrier protein AlsT (alsT).